Here is a 488-residue protein sequence, read N- to C-terminus: Glutamyl-tRNA(Gln) amidotransferase subunit A (488 aa).

Residues Lys77 and Ser152 each act as charge relay system in the active site. Ser176 serves as the catalytic Acyl-ester intermediate.

Belongs to the amidase family. GatA subfamily. Heterotrimer of A, B and C subunits.

The catalysed reaction is L-glutamyl-tRNA(Gln) + L-glutamine + ATP + H2O = L-glutaminyl-tRNA(Gln) + L-glutamate + ADP + phosphate + H(+). Functionally, allows the formation of correctly charged Gln-tRNA(Gln) through the transamidation of misacylated Glu-tRNA(Gln) in organisms which lack glutaminyl-tRNA synthetase. The reaction takes place in the presence of glutamine and ATP through an activated gamma-phospho-Glu-tRNA(Gln). The sequence is that of Glutamyl-tRNA(Gln) amidotransferase subunit A from Streptococcus pneumoniae (strain Hungary19A-6).